We begin with the raw amino-acid sequence, 3843 residues long: NBPF family member NBPF19 (3843 aa).

Positions 70 to 130 form a coiled coil; that stretch reads MLRNERQFKE…RSLNEHLQAL (61 aa). 45 Olduvai domains span residues 165–257, 258–329, 330–421, 424–479, 480–572, 573–665, 668–723, 724–816, 817–909, 912–967, 968–1060, 1061–1153, 1156–1211, 1212–1304, 1305–1397, 1400–1455, 1456–1548, 1549–1641, 1644–1699, 1700–1792, 1793–1885, 1888–1943, 1944–2036, 2037–2129, 2132–2187, 2188–2280, 2281–2373, 2376–2431, 2432–2524, 2525–2617, 2620–2675, 2676–2768, 2769–2861, 2864–2919, 2920–3012, 3013–3105, 3108–3163, 3164–3256, 3257–3349, 3352–3407, 3408–3500, 3501–3593, 3596–3651, 3652–3744, and 3745–3843; these read ENDN…HIIP, ENES…VDIG, RHRW…PSCP, SREL…LDVD, RIKK…RSKK, ERRR…PSCP, and ERRR…IFPQ. Disordered stretches follow at residues 180 to 203 and 249 to 295; these read EKVQ…PEDS and WEDA…EGYS. Acidic residues-rich tracts occupy residues 259–268 and 279–291; these read NESDDEEEEE and ESEE…ESWD. Positions 559–597 are disordered; that stretch reads KGKGKKRRGRRSKKERRRGRKEGEEDQNPPCPRLSRELL. The segment covering 560-578 has biased composition (basic residues); it reads GKGKKRRGRRSKKERRRGR. Residues 803 to 841 are disordered; it reads KGKGKKRRGRRSKKERRRGRKEGEEDQNPPCPRLSRELL. Residues 804–822 are compositionally biased toward basic residues; it reads GKGKKRRGRRSKKERRRGR. The interval 1047 to 1085 is disordered; the sequence is KGKGKKRRGRRSKKERRRGRKEGEEDQNPPCPRLSRELL. Over residues 1048-1066 the composition is skewed to basic residues; sequence GKGKKRRGRRSKKERRRGR. Residues 1291–1329 form a disordered region; that stretch reads KGKGKKRRGRRSKKERRRGRKEGEEDQNPPCPRLSRELL. Positions 1292–1310 are enriched in basic residues; that stretch reads GKGKKRRGRRSKKERRRGR. The segment at 1535-1573 is disordered; sequence KGKGKKRRGRRSKKERRRGRKEGEEDQNPPCPRLSRELL. Over residues 1536–1554 the composition is skewed to basic residues; the sequence is GKGKKRRGRRSKKERRRGR. The interval 1779–1817 is disordered; it reads KGKGKKRRGRRSKKERRRGRKEGEEDQNPPCPRLSRELL. The span at 1780–1798 shows a compositional bias: basic residues; sequence GKGKKRRGRRSKKERRRGR. The tract at residues 2023 to 2061 is disordered; sequence KGKGKKRRGRRSKKERRRGRKEGEEDQNPPCPRLSRELL. The segment covering 2024–2042 has biased composition (basic residues); it reads GKGKKRRGRRSKKERRRGR. Residues 2267-2305 are disordered; that stretch reads KGKGKKRRGRRSKKERRRGRKEGEEDQNPPCPRLSRELL. The segment covering 2268–2286 has biased composition (basic residues); sequence GKGKKRRGRRSKKERRRGR. The disordered stretch occupies residues 2511–2549; the sequence is KGKGKKRRGRRSKKERRRGRKEGEEDQNPPCPRLSRELL. Over residues 2512 to 2530 the composition is skewed to basic residues; it reads GKGKKRRGRRSKKERRRGR. The segment at 2755–2793 is disordered; sequence KGKGKKRRGRRSKKERRRGRKEGEEDQNPPCPRLSRELL. The span at 2756-2774 shows a compositional bias: basic residues; the sequence is GKGKKRRGRRSKKERRRGR. The tract at residues 2999–3037 is disordered; that stretch reads KGKGKKRRGRRSKKERRRGRKEGEEDQNPPCPRLSRELL. A compositionally biased stretch (basic residues) spans 3000 to 3018; it reads GKGKKRRGRRSKKERRRGR. Residues 3243–3281 are disordered; sequence KGKGKKRRGRRSKKERRRGRKEGEEDQNPPCPRLSRELL. Residues 3244-3262 are compositionally biased toward basic residues; that stretch reads GKGKKRRGRRSKKERRRGR. A disordered region spans residues 3487 to 3525; it reads KGKGKKRRGRRSKKERRRGRKEGEEDQNPPCPRLSRELL. Residues 3488–3506 show a composition bias toward basic residues; that stretch reads GKGKKRRGRRSKKERRRGR. Residues 3731–3764 form a disordered region; that stretch reads KGKGKKRRGRRSKKERRRGRKEGEEDQNPPCPRL. The span at 3732 to 3750 shows a compositional bias: basic residues; sequence GKGKKRRGRRSKKERRRGR.

Belongs to the NBPF family.

It is found in the cytoplasm. The protein is NBPF family member NBPF19 of Homo sapiens (Human).